The following is a 105-amino-acid chain: Small cysteine and glycine repeat-containing protein 10 (105 aa).

The interval 4–41 (CGCGGCGGRCSGGCGGGCGGGCGGGCGGGCGGCGGGCG) is 10 X 2 AA repeats of CG.

The protein belongs to the KRTAP type 28 family.

In the hair cortex, hair keratin intermediate filaments are embedded in an interfilamentous matrix, consisting of hair keratin-associated proteins (KRTAP), which are essential for the formation of a rigid and resistant hair shaft through their extensive disulfide bond cross-linking with abundant cysteine residues of hair keratins. The matrix proteins include the high-sulfur and high-glycine-tyrosine keratins. The polypeptide is Small cysteine and glycine repeat-containing protein 10 (Homo sapiens (Human)).